A 420-amino-acid chain; its full sequence is Gamma-glutamyl phosphate reductase (420 aa).

It belongs to the gamma-glutamyl phosphate reductase family.

The protein resides in the cytoplasm. It catalyses the reaction L-glutamate 5-semialdehyde + phosphate + NADP(+) = L-glutamyl 5-phosphate + NADPH + H(+). The protein operates within amino-acid biosynthesis; L-proline biosynthesis; L-glutamate 5-semialdehyde from L-glutamate: step 2/2. Catalyzes the NADPH-dependent reduction of L-glutamate 5-phosphate into L-glutamate 5-semialdehyde and phosphate. The product spontaneously undergoes cyclization to form 1-pyrroline-5-carboxylate. In Laribacter hongkongensis (strain HLHK9), this protein is Gamma-glutamyl phosphate reductase.